Reading from the N-terminus, the 988-residue chain is Transposase for transposon Tn1546 (988 aa).

It belongs to the transposase 7 family.

Its function is as follows. Required for transposition of transposon Tn1546. This Enterococcus faecium (Streptococcus faecium) protein is Transposase for transposon Tn1546.